A 208-amino-acid polypeptide reads, in one-letter code: 3-demethoxyubiquinol 3-hydroxylase (208 aa).

Glu57, Glu87, His90, Glu139, Glu171, and His174 together coordinate Fe cation.

This sequence belongs to the COQ7 family. The cofactor is Fe cation.

Its subcellular location is the cell membrane. The enzyme catalyses a 5-methoxy-2-methyl-3-(all-trans-polyprenyl)benzene-1,4-diol + AH2 + O2 = a 3-demethylubiquinol + A + H2O. It functions in the pathway cofactor biosynthesis; ubiquinone biosynthesis. Functionally, catalyzes the hydroxylation of 2-nonaprenyl-3-methyl-6-methoxy-1,4-benzoquinol during ubiquinone biosynthesis. This Burkholderia pseudomallei (strain 668) protein is 3-demethoxyubiquinol 3-hydroxylase.